We begin with the raw amino-acid sequence, 493 residues long: Neuronal pentraxin receptor (493 aa).

At 1-2 (MK) the chain is on the cytoplasmic side. The helical; Signal-anchor for type II membrane protein transmembrane segment at 3-23 (FLAVLLAAGMLAFLGAVICII) threads the bilayer. The Extracellular segment spans residues 24-493 (ASVPLAASPA…FDVCKGRAKA (470 aa)). The interval 37-72 (PGGTDNASAASAAGGSGPQRSLSALHSAGGSAGPSV) is disordered. The N-linked (GlcNAc...) asparagine glycan is linked to Asn-42. The segment covering 57–72 (SLSALHSAGGSAGPSV) has biased composition (low complexity). A glycan (N-linked (GlcNAc...) asparagine) is linked at Asn-211. The Pentraxin (PTX) domain maps to 285-487 (DAFKVSIPIR…GAKKAAFDVC (203 aa)). A disulfide bridge connects residues Cys-315 and Cys-376. Asn-340, Glu-418, Gln-419, Asp-420, and Gln-430 together coordinate Ca(2+). Asn-456 is a glycosylation site (N-linked (GlcNAc...) asparagine).

Heteropentamer with NPTX1 and/or NPTX2. Also binds taipoxin-associated calcium-binding protein 49 (TCBP49/RCN2). Interacts with KLHL2. Ca(2+) serves as cofactor. Ubiquitinated by a cullin-RING-based BCR (BTB-CUL3-RBX1) E3 ubiquitin-protein ligase complex containing KLHL2.

It is found in the membrane. Its function is as follows. May be involved in mediating uptake of synaptic material during synapse remodeling or in mediating the synaptic clustering of AMPA glutamate receptors at a subset of excitatory synapses. This is Neuronal pentraxin receptor (Nptxr) from Mus musculus (Mouse).